We begin with the raw amino-acid sequence, 289 residues long: Purine nucleoside phosphorylase (289 aa).

N-acetylmethionine is present on Met1. Phosphate-binding positions include Ser33, His64, and 84 to 86 (RFH). Tyr88 lines the a purine D-ribonucleoside pocket. Residue Ala116 participates in phosphate binding. 2 residues coordinate a purine D-ribonucleoside: Glu201 and Met219. Ser220 contributes to the phosphate binding site. Asn243 contacts a purine D-ribonucleoside. A Phosphoserine modification is found at Ser251. His257 is an a purine D-ribonucleoside binding site.

This sequence belongs to the PNP/MTAP phosphorylase family. In terms of assembly, homotrimer. As to expression, expressed in red blood cells; overexpressed in red blood cells (cytoplasm) of patients with hereditary non-spherocytic hemolytic anemia of unknown etiology.

It localises to the cytoplasm. It carries out the reaction inosine + phosphate = alpha-D-ribose 1-phosphate + hypoxanthine. The catalysed reaction is guanosine + phosphate = alpha-D-ribose 1-phosphate + guanine. It catalyses the reaction 2'-deoxyguanosine + phosphate = 2-deoxy-alpha-D-ribose 1-phosphate + guanine. The enzyme catalyses 2'-deoxyinosine + phosphate = 2-deoxy-alpha-D-ribose 1-phosphate + hypoxanthine. It functions in the pathway purine metabolism; purine nucleoside salvage. Inhibited by 5'-deaza-1'-aza-2c-deoxy-1'-(9-methylene)-Immucilin-G (DADMe-ImmG). In terms of biological role, catalyzes the phosphorolytic breakdown of the N-glycosidic bond in the beta-(deoxy)ribonucleoside molecules, with the formation of the corresponding free purine bases and pentose-1-phosphate. Preferentially acts on 6-oxopurine nucleosides including inosine and guanosine. This is Purine nucleoside phosphorylase (PNP) from Homo sapiens (Human).